We begin with the raw amino-acid sequence, 416 residues long: Tumor necrosis factor receptor superfamily member 16 (416 aa).

An N-terminal signal peptide occupies residues 1–19; sequence MAGFVPLLLLLLPAGPTWG. TNFR-Cys repeat units follow at residues 23–57, 58–99, 100–138, and 140–180; these read KCLT…TVCE, PCLD…DAVC, RCAY…DTVC, and ECPE…DAEC. Intrachain disulfides connect cysteine 24–cysteine 35, cysteine 36–cysteine 49, cysteine 39–cysteine 56, cysteine 59–cysteine 75, cysteine 78–cysteine 91, cysteine 81–cysteine 99, cysteine 101–cysteine 114, cysteine 117–cysteine 130, cysteine 120–cysteine 138, cysteine 141–cysteine 156, cysteine 159–cysteine 172, and cysteine 162–cysteine 180. At 29 to 239 the chain is on the extracellular side; sequence YTTSGECCKA…PVVSRGTADN (211 aa). The N-linked (GlcNAc...) asparagine glycan is linked to asparagine 52. A helical membrane pass occupies residues 240-261; sequence LIPVYCSILAAVVVGLVAYIAF. Topologically, residues 262 to 416 are cytoplasmic; that stretch reads KRWNSCKQNK…YSESTATSPV (155 aa). Composition is skewed to polar residues over residues 270–284 and 294–315; these read NKQG…QTPS and SGIS…STQG. A disordered region spans residues 270–328; that stretch reads NKQGANNRPVNQTPSPEGEKLHSDSGISVDSQSLHDQQPPNQSTQGPAPKGDGSLYASL. One can recognise a Death domain in the interval 333–410; that stretch reads QEEVEKLLSS…DIAESLYSES (78 aa).

Homodimer; disulfide-linked. Heterodimer with SORCS2. The extracellular domains of the heterodimer bind NGF. Post-translationally, N- and O-glycosylated. Phosphorylated on serine residues. In terms of tissue distribution, detected in embryonic dorsal root ganglion and retina.

Its subcellular location is the cell membrane. It is found in the perikaryon. The protein resides in the cell projection. It localises to the growth cone. The protein localises to the dendritic spine. In terms of biological role, low affinity receptor which can bind to NGF, BDNF, NTF3, and NTF4. Forms a heterodimeric receptor with SORCS2 that binds the precursor forms of NGF, BDNF and NTF3 with high affinity, and has much lower affinity for mature NGF and BDNF. Plays an important role in differentiation and survival of specific neuronal populations during development. Can mediate cell survival as well as cell death of neural cells. Plays a role in the inactivation of RHOA. Necessary for the circadian oscillation of clock genes in the suprachiasmatic nucleus (SCmgetaN) of the brain and in liver and of the genes involved in glucose and lipid metabolism in the liver. In Gallus gallus (Chicken), this protein is Tumor necrosis factor receptor superfamily member 16 (NGFR).